The chain runs to 153 residues: MTIWEISEKADYIAQRHRRLQDQWHIYCNSLVQGITLSKARLHHAMSCAPDKELCFVLFEHFRIYVTLADGFNSHTIEYYVETKDGEDKQRIAQAQLSIDGMIDGKVNIRDREQVLEHYLEKIAGVYDSLYTAIENNVPVNLSQLVKGQSPAA.

Functionally, regulatory protein for the formate hydrogenlyase system. Could act by directly interacting with FhlA or by preventing the binding of FhlA to the upstream activatory sequence. The sequence is that of Formate hydrogenlyase regulatory protein HycA (hycA) from Escherichia coli O157:H7.